The following is a 334-amino-acid chain: Phosphate acyltransferase (334 aa).

The protein belongs to the PlsX family. Homodimer. Probably interacts with PlsY.

The protein localises to the cytoplasm. It carries out the reaction a fatty acyl-[ACP] + phosphate = an acyl phosphate + holo-[ACP]. The protein operates within lipid metabolism; phospholipid metabolism. Its function is as follows. Catalyzes the reversible formation of acyl-phosphate (acyl-PO(4)) from acyl-[acyl-carrier-protein] (acyl-ACP). This enzyme utilizes acyl-ACP as fatty acyl donor, but not acyl-CoA. In Streptococcus thermophilus (strain ATCC BAA-491 / LMD-9), this protein is Phosphate acyltransferase.